The sequence spans 162 residues: NADH-quinone oxidoreductase subunit I (162 aa).

4Fe-4S ferredoxin-type domains lie at 53-83 (LRRY…IDSA) and 93-122 (TRYD…ETHI). Positions 63, 66, 69, 73, 102, 105, 108, and 112 each coordinate [4Fe-4S] cluster.

Belongs to the complex I 23 kDa subunit family. As to quaternary structure, NDH-1 is composed of 14 different subunits. Subunits NuoA, H, J, K, L, M, N constitute the membrane sector of the complex. The cofactor is [4Fe-4S] cluster.

Its subcellular location is the cell inner membrane. The catalysed reaction is a quinone + NADH + 5 H(+)(in) = a quinol + NAD(+) + 4 H(+)(out). NDH-1 shuttles electrons from NADH, via FMN and iron-sulfur (Fe-S) centers, to quinones in the respiratory chain. The immediate electron acceptor for the enzyme in this species is believed to be ubiquinone. Couples the redox reaction to proton translocation (for every two electrons transferred, four hydrogen ions are translocated across the cytoplasmic membrane), and thus conserves the redox energy in a proton gradient. This is NADH-quinone oxidoreductase subunit I from Xanthomonas oryzae pv. oryzae (strain MAFF 311018).